The chain runs to 167 residues: uncharacterized protein (167 aa).

The helical transmembrane segment at 4–24 (IIGLFFIIILIVINISILAYD) threads the bilayer.

The protein localises to the membrane. This is an uncharacterized protein from Rickettsia prowazekii (strain Madrid E).